The following is a 239-amino-acid chain: MGRKWNNIKEKKASKDANTSRIYAKFGREIYVAAKQGEPDPESNQALKVVLERAKTYSVPKNIIERAIEKAKGGAEENYDELRYEGFGPNGSMIIVDALTNNVNRTAPEVRAAFGKNGGNMGVSGSVAYMFDATAVIGVEGKTADEALEILMEADVDVRDILEEDDSAIVYAEPDQFHAVQEAFKNAGVEEFTVAELTMLAQSEVTLPDDAKEQFEKLIDALEDLEDVQQVYHNVDLGE.

Belongs to the TACO1 family. YeeN subfamily.

Its subcellular location is the cytoplasm. The polypeptide is Probable transcriptional regulatory protein YeeI (yeeI) (Bacillus subtilis (strain 168)).